A 707-amino-acid chain; its full sequence is Polyribonucleotide nucleotidyltransferase (707 aa).

Mg(2+) contacts are provided by Asp-487 and Asp-493. Residues 554 to 613 (PKILTMNINPDKIRDVIGPSGKQINKIIEDTGVKIDIEQDGTIFISSTDESSNQKAKKII) form the KH domain. Residues 623-691 (GQLYLGKVKR…KQGRVNLSRK (69 aa)) enclose the S1 motif domain.

Belongs to the polyribonucleotide nucleotidyltransferase family. Mg(2+) serves as cofactor.

It is found in the cytoplasm. It carries out the reaction RNA(n+1) + phosphate = RNA(n) + a ribonucleoside 5'-diphosphate. Its function is as follows. Involved in mRNA degradation. Catalyzes the phosphorolysis of single-stranded polyribonucleotides processively in the 3'- to 5'-direction. The protein is Polyribonucleotide nucleotidyltransferase of Bacillus velezensis (strain DSM 23117 / BGSC 10A6 / LMG 26770 / FZB42) (Bacillus amyloliquefaciens subsp. plantarum).